A 151-amino-acid chain; its full sequence is Caveolin-3 (151 aa).

Topologically, residues 1–83 (MMAEEHTDLE…RLLSTLLGVP (83 aa)) are cytoplasmic. Lys38 participates in a covalent cross-link: Glycyl lysine isopeptide (Lys-Gly) (interchain with G-Cter in SUMO3). Positions 64-114 (TFTVSKYWCYRLLSTLLGVPLALLWGFLFACISFCHIWAVVPCIKSYLIEI) are required for interaction with DAG1. The segment at residues 84–104 (LALLWGFLFACISFCHIWAVV) is an intramembrane region (helical). Residues 105–151 (PCIKSYLIEIQCISHIYSLCIRTFCNPLFAALGQVCSNIKVMLRKEV) are Cytoplasmic-facing.

Belongs to the caveolin family. Homooligomer. Interacts with DYSF. Interacts with DLG1 and KCNA5; forms a ternary complex. Interacts with DAG1 (via its C-terminal); the interaction prevents binding of DAG1 with DMD. Interacts with TRIM72. Interacts with MUSK; may regulate MUSK signaling. Interacts with POPDC1. Interacts with CAVIN1, CAVIN2 and CAVIN4. Sumoylation with SUMO3 by PIAS4 may reduce agonist-induced internalization and desensitization of adrenergic receptor ABRD2.

The protein resides in the golgi apparatus membrane. It localises to the cell membrane. Its subcellular location is the membrane. It is found in the caveola. The protein localises to the sarcolemma. Its function is as follows. May act as a scaffolding protein within caveolar membranes. Interacts directly with G-protein alpha subunits and can functionally regulate their activity. May also regulate voltage-gated potassium channels. Plays a role in the sarcolemma repair mechanism of both skeletal muscle and cardiomyocytes that permits rapid resealing of membranes disrupted by mechanical stress. Mediates the recruitment of CAVIN2 and CAVIN3 proteins to the caveolae. This Bos taurus (Bovine) protein is Caveolin-3 (CAV3).